The following is a 129-amino-acid chain: Large ribosomal subunit protein bL20 (129 aa).

Belongs to the bacterial ribosomal protein bL20 family.

Binds directly to 23S ribosomal RNA and is necessary for the in vitro assembly process of the 50S ribosomal subunit. It is not involved in the protein synthesizing functions of that subunit. The chain is Large ribosomal subunit protein bL20 from Mycobacteroides abscessus (strain ATCC 19977 / DSM 44196 / CCUG 20993 / CIP 104536 / JCM 13569 / NCTC 13031 / TMC 1543 / L948) (Mycobacterium abscessus).